The chain runs to 286 residues: Aminoglycoside N(3)-acetyltransferase III (286 aa).

It belongs to the antibiotic N-acetyltransferase family.

The catalysed reaction is a 2-deoxystreptamine antibiotic + acetyl-CoA = an N(3)-acetyl-2-deoxystreptamine antibiotic + CoA + H(+). In terms of biological role, resistance to antibiotics containing the 2-deoxy-streptamine ring including gentamicin, kanamycin, tobramycin, neomycin and apramycin. In Acinetobacter baumannii, this protein is Aminoglycoside N(3)-acetyltransferase III (aacC2).